The sequence spans 279 residues: Succinate dehydrogenase [ubiquinone] iron-sulfur subunit 1, mitochondrial (279 aa).

Residues 1 to 28 (MASGLIGRLVGTKPSKLATAARLIPARW) constitute a mitochondrion transit peptide. Residues 52 to 141 (FQIYRWNPDN…ETTITPLPHM (90 aa)) enclose the 2Fe-2S ferredoxin-type domain. The [2Fe-2S] cluster site is built by Cys102, Cys107, and Cys122. The 31-residue stretch at 184–214 (DRAKLDGMYECILCACCSTSCPSYWWNPESY) folds into the 4Fe-4S ferredoxin-type domain. Residues Cys194, Cys197, and Cys200 each contribute to the [4Fe-4S] cluster site. Residue Cys204 participates in [3Fe-4S] cluster binding. Residue Trp209 participates in a ubiquinone binding. [3Fe-4S] cluster is bound by residues Cys251 and Cys257. Cys261 is a binding site for [4Fe-4S] cluster.

The protein belongs to the succinate dehydrogenase/fumarate reductase iron-sulfur protein family. Component of complex II composed of eight subunits in plants: four classical SDH subunits SDH1, SDH2, SDH3 and SDH4 (a flavoprotein (FP), an iron-sulfur protein (IP), and a cytochrome b composed of a large and a small subunit.), as well as four subunits unknown in mitochondria from bacteria and heterotrophic eukaryotes. Requires [2Fe-2S] cluster as cofactor. [3Fe-4S] cluster is required as a cofactor. The cofactor is [4Fe-4S] cluster. In terms of tissue distribution, ubiquitous. Preferentially expressed in flowers and inflorescences.

The protein resides in the mitochondrion inner membrane. It catalyses the reaction a quinone + succinate = fumarate + a quinol. Its pathway is carbohydrate metabolism; tricarboxylic acid cycle; fumarate from succinate (eukaryal route): step 1/1. Functionally, iron-sulfur protein (IP) subunit of succinate dehydrogenase (SDH) that is involved in complex II of the mitochondrial electron transport chain and is responsible for transferring electrons from succinate to ubiquinone (coenzyme Q). This chain is Succinate dehydrogenase [ubiquinone] iron-sulfur subunit 1, mitochondrial (SDH2-1), found in Arabidopsis thaliana (Mouse-ear cress).